The chain runs to 248 residues: Ubiquinone biosynthesis O-methyltransferase (248 aa).

Residues R40, G71, D92, and M135 each coordinate S-adenosyl-L-methionine.

It belongs to the methyltransferase superfamily. UbiG/COQ3 family.

The catalysed reaction is a 3-demethylubiquinol + S-adenosyl-L-methionine = a ubiquinol + S-adenosyl-L-homocysteine + H(+). It catalyses the reaction a 3-(all-trans-polyprenyl)benzene-1,2-diol + S-adenosyl-L-methionine = a 2-methoxy-6-(all-trans-polyprenyl)phenol + S-adenosyl-L-homocysteine + H(+). It participates in cofactor biosynthesis; ubiquinone biosynthesis. O-methyltransferase that catalyzes the 2 O-methylation steps in the ubiquinone biosynthetic pathway. In Roseobacter denitrificans (strain ATCC 33942 / OCh 114) (Erythrobacter sp. (strain OCh 114)), this protein is Ubiquinone biosynthesis O-methyltransferase.